A 367-amino-acid polypeptide reads, in one-letter code: Dihydroorotate dehydrogenase (quinone) (367 aa).

Residues 67-71 and Thr91 each bind FMN; that span reads AGFDK. Substrate is bound at residue Lys71. 116–120 contacts substrate; sequence NRLGF. Asn145 and Asn178 together coordinate FMN. Residue Asn178 coordinates substrate. Ser181 functions as the Nucleophile in the catalytic mechanism. Asn183 is a binding site for substrate. Residues Lys219 and Thr247 each contribute to the FMN site. 248-249 is a substrate binding site; sequence NT. Residues Gly269, Gly298, and 319–320 contribute to the FMN site; that span reads YT.

It belongs to the dihydroorotate dehydrogenase family. Type 2 subfamily. In terms of assembly, monomer. Requires FMN as cofactor.

The protein resides in the cell membrane. It carries out the reaction (S)-dihydroorotate + a quinone = orotate + a quinol. It participates in pyrimidine metabolism; UMP biosynthesis via de novo pathway; orotate from (S)-dihydroorotate (quinone route): step 1/1. Functionally, catalyzes the conversion of dihydroorotate to orotate with quinone as electron acceptor. The chain is Dihydroorotate dehydrogenase (quinone) from Roseiflexus castenholzii (strain DSM 13941 / HLO8).